The following is a 1039-amino-acid chain: Probable inorganic carbon transporter subunit DabA 2 (1039 aa).

Zn(2+) is bound by residues Cys-462, Asp-464, His-721, and Cys-736.

Belongs to the inorganic carbon transporter (TC 9.A.2) DabA family. In terms of assembly, forms a complex with DabB. It depends on Zn(2+) as a cofactor.

The protein localises to the cell inner membrane. Its function is as follows. Part of an energy-coupled inorganic carbon pump. The protein is Probable inorganic carbon transporter subunit DabA 2 of Nitrobacter hamburgensis (strain DSM 10229 / NCIMB 13809 / X14).